The following is a 435-amino-acid chain: Nematode resistance protein-like HSPRO2 (435 aa).

As to quaternary structure, interacts with SNF4.

Its subcellular location is the cytoplasm. Functionally, positive regulator of basal resistance. The chain is Nematode resistance protein-like HSPRO2 (HSPRO2) from Arabidopsis thaliana (Mouse-ear cress).